A 1580-amino-acid polypeptide reads, in one-letter code: Adhesion G protein-coupled receptor L3 (1580 aa).

A signal peptide spans 1–19; that stretch reads MWPSQLLVFMMLLAPIIHG. The Extracellular segment spans residues 20–949; that stretch reads GKHSERHPAL…VHDLLLDVIT (930 aa). Residues 23-81 are disordered; the sequence is SERHPALASPLRHAERGPGGALPPRHLLQQPAAERATAHRGPGPRGATRGVRGPGAHGA. In terms of domain architecture, SUEL-type lectin spans 103 to 192; it reads SCESYPIELR…KYLEVQYECV (90 aa). Disulfide bonds link Cys104-Cys134, Cys113-Cys191, Cys146-Cys178, Cys159-Cys165, and Cys203-Cys385. Asn161 is a glycosylation site (N-linked (GlcNAc...) asparagine). The 260-residue stretch at 202–461 folds into the Olfactomedin-like domain; sequence LCPGLLKGVY…VVKYSLDFGP (260 aa). The segment at 317–347 is interaction with FLRT3; sequence YHDTSPYRWGGKSDIDLAVDENGLWVIYATE. Ca(2+) is bound by residues Asp332, Asn380, Ala381, and Val435. Residues 494-540 form a disordered region; it reads EISTTGPLGTGSTTTSTTLRTTTWSPGRSTTPSVSGRRNRSTSTPSP. Over residues 496–521 the composition is skewed to low complexity; it reads STTGPLGTGSTTTSTTLRTTTWSPGR. The span at 522-539 shows a compositional bias: polar residues; it reads STTPSVSGRRNRSTSTPS. Asn532, Asn617, Asn827, Asn840, Asn885, and Asn911 each carry an N-linked (GlcNAc...) asparagine glycan. One can recognise a GAIN-B domain in the interval 756 to 935; that stretch reads DIVRENTDNI…AVLMAHVEVK (180 aa). 2 cysteine pairs are disulfide-bonded: Cys886–Cys917 and Cys905–Cys919. The tract at residues 886-935 is GPS; it reads CSFWSYSKRTMTGYWSTQGCRLLTTNKTHTTCSCNHLTNFAVLMAHVEVK. The stachel stretch occupies residues 923 to 939; the sequence is TNFAVLMAHVEVKHSDA. The helical transmembrane segment at 950-970 threads the bilayer; it reads WVGILLSLVCLLICIFTFCFF. Topologically, residues 971–978 are cytoplasmic; it reads RGLQSDRN. Residues 979–999 traverse the membrane as a helical segment; it reads TIHKNLCISLFVAELLFLIGI. N-linked (GlcNAc...) asparagine glycosylation is present at Asn1000. Over 1000-1007 the chain is Extracellular; that stretch reads NRTDQPIA. Residues 1008 to 1028 traverse the membrane as a helical segment; sequence CAVFAALLHFFFLAAFTWMFL. Residues 1029-1050 lie on the Cytoplasmic side of the membrane; that stretch reads EGVQLYIMLVEVFESEHSRRKY. Residues 1051–1071 traverse the membrane as a helical segment; it reads FYLVGYGMPALIVAVSAAVDY. The Extracellular segment spans residues 1072–1088; sequence RSYGTDKVCWLRLDTYF. The chain crosses the membrane as a helical span at residues 1089–1109; the sequence is IWSFIGPATLIIMLNVIFLGI. Over 1110–1142 the chain is Cytoplasmic; it reads ALYKMFHHTAILKPESGCLDNINYEDNRPFIKS. The chain crosses the membrane as a helical span at residues 1143-1163; the sequence is WVIGAIALLCLLGLTWAFGLM. The Extracellular portion of the chain corresponds to 1164-1169; it reads YINEST. Asn1166 is a glycosylation site (N-linked (GlcNAc...) asparagine). A helical membrane pass occupies residues 1170–1190; it reads VIMAYLFTIFNSLQGMFIFIF. At 1191–1580 the chain is on the cytoplasmic side; the sequence is HCVLQKKVRK…KGPAHLVTSL (390 aa). The tract at residues 1213 to 1238 is disordered; sequence GRSTESSIGSGKTSGSRTPGRYSTGS. At Ser1254 the chain carries Phosphoserine. Residues 1555 to 1580 are disordered; it reads FIVPPNKDGTPPEGSSKGPAHLVTSL. Residues 1575–1580 carry the PDZ-binding motif; that stretch reads HLVTSL.

It belongs to the G-protein coupled receptor 2 family. LN-TM7 subfamily. Heterodimer of 2 chains generated by proteolytic processing; the large extracellular N-terminal fragment and the membrane-bound C-terminal fragment predominantly remain associated and non-covalently linked. Interacts (via olfactomedin-like domain) with FLRT1 (via extracellular domain). Interacts (via olfactomedin-like domain) with FLRT2 (via extracellular domain). Interacts (via olfactomedin-like domain) with FLRT3 (via extracellular domain); the interaction is direct. Interacts (via extracellular domain) with TENM1. Interacts (via extracellular domain) with TENM2. Interacts (via extracellular domain) with TENM3. Identified in a complex with FLRT3 and UNC5B; does not interact with UNC5B by itself. Identified in a complex with FLRT3 and UNC5D; does not interact with UNC5D by itself. In terms of assembly, interacts (via PDZ-binding motif) with SHANK3. Interacts (via PDZ-binding motif) with DLG4. Autoproteolytically processed at the GPS region of the GAIN-B domain; this cleavage modulates receptor activity. As to expression, brain-specific distribution but low levels are also detected in lung and spleen.

It localises to the cell membrane. It is found in the postsynaptic cell membrane. Its subcellular location is the cell projection. The protein localises to the axon. The protein resides in the cell junction. Its activity is regulated as follows. Forms a heterodimer of 2 chains generated by proteolytic processing that remain associated through non-covalent interactions mediated by the GAIN-B domain. In the inactivated receptor, the Stachel sequence (also named stalk) is embedded in the GAIN-B domain, where it adopts a beta-strand conformation. On activation, the Stachel moves into the 7 transmembrane region and adopts a twisted hook-shaped configuration that forms contacts within the receptor, leading to coupling of a G-alpha protein, which activates signaling. The cleaved GAIN-B and N-terminal domains can then dissociate from the rest of the receptor. Functionally, orphan adhesion G-protein coupled receptor (aGPCR), which mediates synapse specificity. Ligand binding causes a conformation change that triggers signaling via guanine nucleotide-binding proteins (G proteins) and modulates the activity of downstream effectors. ADGRL3 is coupled with different classes of G alpha proteins, such as G(12)/G(13), G(s), G(i) or G(q), depending on the context. Coupling to G(12)/G(13) G proteins, which mediates the activation Rho small GTPases is the most efficient. Following G-protein coupled receptor activation, associates with cell adhesion molecules that are expressed at the surface of adjacent cells to direct synapse specificity. Specifically mediates the establishment of Schaffer-collateral synapses formed by CA3-region axons on CA1-region pyramidal neurons in the hippocampus. Localizes to postsynaptic spines in excitatory synapses in the S.oriens and S.radiatum and interacts with presynaptic cell adhesion molecules FLRT3 and TENM2, promoting synapse formation. Plays a role in the development of glutamatergic synapses in the cortex. Important in determining the connectivity rates between the principal neurons in the cortex. In terms of biological role, orphan adhesion G-protein coupled receptor (aGPCR), which mediates synapse specificity. Ligand binding causes a conformation change that triggers signaling via guanine nucleotide-binding proteins (G proteins) and modulates the activity of downstream effectors, such as adenylate cyclase. Isoform 1 is specifically coupled to G(s) G proteins and mediates activation of adenylate cyclase activity. Following G-protein coupled receptor activation, undergoes liquid-liquid phase transition, associates with (1) cell adhesion molecules that are expressed at the surface of adjacent cells, as well as (2) PDZ-containing proteins, such as SHANK3 and DLG4, in the cytoplasm to direct synapse formation. The polypeptide is Adhesion G protein-coupled receptor L3 (Bos taurus (Bovine)).